The chain runs to 147 residues: Large ribosomal subunit protein uL15 (147 aa).

Basic and acidic residues predominate over residues 1-20 (MTMHLNDLKPADGARTERTR). The tract at residues 1–64 (MTMHLNDLKP…GGQTPMQRRL (64 aa)) is disordered. The span at 23–33 (RGIGSGLGKTC) shows a compositional bias: gly residues. The segment covering 34–47 (GRGHKGSFARKGGG) has biased composition (basic residues).

Belongs to the universal ribosomal protein uL15 family. Part of the 50S ribosomal subunit.

Functionally, binds to the 23S rRNA. In Xanthomonas campestris pv. campestris (strain 8004), this protein is Large ribosomal subunit protein uL15.